The primary structure comprises 990 residues: Putative ariadne-like RING finger protein R811 (990 aa).

Residues 8-201 form the VWFA domain; that stretch reads DLAIVVDATG…IITQTTIKLL (194 aa). The TRIAD supradomain stretch occupies residues 797 to 990; the sequence is EKGLCMICFN…GGAFEYDQDD (194 aa). Zn(2+) contacts are provided by Cys801, Cys804, Cys827, and Cys830. The RING-type 1 zinc-finger motif lies at 801–854; it reads CMICFNEFSKSNLRQICGRKVCQSVACYDCMKSWYGENKVGDLIHVNALTCPFC. The segment at 855–903 adopts an IBR-type zinc-finger fold; sequence KQCPMFNILAAFNRQVCAMVRTNNSFDIDWWYGWCLKCFQPKKVVEKEC. The Zn(2+) site is built by Cys930 and Cys935. The RING-type 2; atypical zinc finger occupies 930–961; it reads CPNSLCKIPIIKDGGCNHMECTACKKHFCWLC. Cys945 is a catalytic residue. Cys950 and Cys953 together coordinate Zn(2+).

The chain is Putative ariadne-like RING finger protein R811 from Acanthamoeba polyphaga (Amoeba).